The chain runs to 1862 residues: Protein RRP5 homolog (1862 aa).

Residues 1–56 are disordered; the sequence is MANLEESFPRGGTRKLHKSEKSSQQVVEQDNLFDVSTEEGPIKRKKSQKGPAKTKK. A2 is modified (N-acetylalanine). S7 carries the post-translational modification Phosphoserine. A compositionally biased stretch (basic residues) spans 43–56; sequence KRKKSQKGPAKTKK. 4 S1 motif domains span residues 83 to 171, 187 to 258, 281 to 346, and 365 to 436; these read GMRI…LSVN, GMLL…LSVE, GLLV…LSLR, and GAVL…LSLR. S438 carries the phosphoserine modification. S1 motif domains lie at 453–522, 542–611, 636–707, 729–798, and 846–911; these read GTVV…MTLK, GLQT…LSFR, GQLV…LCRK, GMLL…LSLR, and GMVL…VSLH. Residues 999–1036 form a disordered region; that stretch reads SKRTRMPVQRDSETVDDKGEEKEEEEEEEEKEEENLTV. Positions 1006–1019 are enriched in basic and acidic residues; the sequence is VQRDSETVDDKGEE. Residues 1020-1033 show a composition bias toward acidic residues; it reads KEEEEEEEEKEEEN. 4 consecutive S1 motif domains span residues 1047 to 1120, 1160 to 1233, 1241 to 1309, and 1335 to 1407; these read GDKV…ISHP, GQTV…LSLI, GEVA…LSLR, and GQLL…LSLL. Disordered stretches follow at residues 1406–1520 and 1545–1577; these read LLPS…STEV and REESSDSEDEQPHQAKKKKGKKERELEKQKAEK. Basic and acidic residues-rich tracts occupy residues 1423–1437 and 1445–1454; these read PKQEERSGGAEEGQK and RREEKEEPQK. A Glycyl lysine isopeptide (Lys-Gly) (interchain with G-Cter in SUMO2) cross-link involves residue K1424. 2 positions are modified to phosphoserine: S1468 and S1490. Over residues 1566–1577 the composition is skewed to basic and acidic residues; it reads KERELEKQKAEK. HAT repeat units lie at residues 1590–1622, 1696–1728, 1766–1798, and 1800–1835; these read GRQPESADDFDRLVLSSPNSSILWLQYMAFHLQ, EKYKEAGELYNRMLKRFRQEKAVWIKYGAFVLG, GDVERAKAIFENTLSTYPKRTDVWSVYIDMTIK, and GSQTAVRDIFERVIHLSLAPKRMKFFFKRYLDYEKQ.

In terms of assembly, interacts with NF-kappa-B p50/NFKB1 and NF-kappa-B p65/RELA. In terms of tissue distribution, ubiquitous.

It is found in the nucleus. Its subcellular location is the nucleolus. In terms of biological role, essential for the generation of mature 18S rRNA, specifically necessary for cleavages at sites A0, 1 and 2 of the 47S precursor. Directly interacts with U3 snoRNA. The polypeptide is Protein RRP5 homolog (Pdcd11) (Mus musculus (Mouse)).